A 66-amino-acid chain; its full sequence is Large ribosomal subunit protein bL35 (66 aa).

The protein belongs to the bacterial ribosomal protein bL35 family.

The protein is Large ribosomal subunit protein bL35 of Ruegeria sp. (strain TM1040) (Silicibacter sp.).